Here is a 78-residue protein sequence, read N- to C-terminus: Small ribosomal subunit protein bS18 (78 aa).

Belongs to the bacterial ribosomal protein bS18 family. Part of the 30S ribosomal subunit. Forms a tight heterodimer with protein bS6.

Functionally, binds as a heterodimer with protein bS6 to the central domain of the 16S rRNA, where it helps stabilize the platform of the 30S subunit. The protein is Small ribosomal subunit protein bS18 of Levilactobacillus brevis (strain ATCC 367 / BCRC 12310 / CIP 105137 / JCM 1170 / LMG 11437 / NCIMB 947 / NCTC 947) (Lactobacillus brevis).